The following is a 445-amino-acid chain: Gasdermin-A (445 aa).

Residues 1-251 (MTMFENVTRA…VILIQASDVG (251 aa)) are triggers pyroptosis. Position 9-13 (9-13 (RALAR)) interacts with a cardiolipin. A run of 4 beta stranded transmembrane segments spans residues 78–95 (NFGF…DVDV), 99–120 (VKVK…TLSV), 163–179 (VTLE…SLPF), and 183–197 (LGLQ…AVTI).

Belongs to the gasdermin family. In terms of assembly, homooligomer; homooligomeric ring-shaped pore complex containing 18-36 subunits when inserted in the membrane. Post-translationally, cleavage by S.pyogenes SpeB relieves autoinhibition by releasing the N-terminal moiety (Gasdermin-A, N-terminal) that initiates pyroptosis. In terms of processing, palmitoylated. Expressed predominantly in the gastrointestinal tract and, at a lower level, in the skin. Also detected in mammary gland. In the gastrointestinal tract, mainly expressed in differentiated cells, including the differentiated cell layer of esophagus and mucus-secreting pit cells of the gastric epithelium. Down-regulated in gastric cancer cells.

Its subcellular location is the cytoplasm. The protein resides in the perinuclear region. It is found in the cytosol. It localises to the cell membrane. With respect to regulation, the full-length protein before cleavage is inactive: intramolecular interactions between N- and C-terminal domains mediate autoinhibition in the absence of activation signal. The intrinsic pyroptosis-inducing activity is carried by the released N-terminal moiety (Gasdermin-A, N-terminal) following cleavage by S.pyogenes effector protein SpeB. Functionally, this form constitutes the precursor of the pore-forming protein and acts as a sensor of infection: upon infection by S.pyogenes, specifically cleaved by S.pyogenes effector protein SpeB in epithelial cells, releasing the N-terminal moiety (Gasdermin-A, N-terminal) that binds to membranes and forms pores, triggering pyroptosis. In terms of biological role, pore-forming protein that causes membrane permeabilization and pyroptosis. Released upon cleavage by S.pyogenes effector protein SpeB, and binds to membrane inner leaflet lipids. Homooligomerizes within the membrane and forms pores of 10-15 nanometers (nm) of inner diameter, triggering pyroptosis. Pyroptosis triggers the elimination of the infected skin cell, depriving the pathogen of its protective niche, while inducing an inflammatory response. This ultimately prevents bacterial penetration of the epithelial barrier and a subsequent systemic dissemination of the pathogen. Binds to cardiolipin and other acidic phospholipids, such as phosphatidylserine, which mediate its targeting to the inner leaflet membrane. In Homo sapiens (Human), this protein is Gasdermin-A.